Here is a 229-residue protein sequence, read N- to C-terminus: MIRAIVTDIEGTTSDIRFVHNVLFPYARERLAAFVTARQYAEPVKSILDNLRNEIARPDASTAELIETLFTFMDEDRKSTALKALQGIIWHDGYVNGDFTGHLYPDVLPALEKWKAQGIDLYVYSSGSVAAQKLLFGYSDEGDITHLFSGYFDTHIGAKRETQSYRNIASYIGVAPSQILFLSDVYQELDAAEEAGLRTLQLIRGEGDGASRHHQVHQFDDINPEQILS.

It belongs to the HAD-like hydrolase superfamily. MasA/MtnC family. In terms of assembly, monomer. The cofactor is Mg(2+).

The catalysed reaction is 5-methylsulfanyl-2,3-dioxopentyl phosphate + H2O = 1,2-dihydroxy-5-(methylsulfanyl)pent-1-en-3-one + phosphate. Its pathway is amino-acid biosynthesis; L-methionine biosynthesis via salvage pathway; L-methionine from S-methyl-5-thio-alpha-D-ribose 1-phosphate: step 3/6. The protein operates within amino-acid biosynthesis; L-methionine biosynthesis via salvage pathway; L-methionine from S-methyl-5-thio-alpha-D-ribose 1-phosphate: step 4/6. In terms of biological role, bifunctional enzyme that catalyzes the enolization of 2,3-diketo-5-methylthiopentyl-1-phosphate (DK-MTP-1-P) into the intermediate 2-hydroxy-3-keto-5-methylthiopentenyl-1-phosphate (HK-MTPenyl-1-P), which is then dephosphorylated to form the acireductone 1,2-dihydroxy-3-keto-5-methylthiopentene (DHK-MTPene). This chain is Enolase-phosphatase E1, found in Citrobacter koseri (strain ATCC BAA-895 / CDC 4225-83 / SGSC4696).